We begin with the raw amino-acid sequence, 35 residues long: Conotoxin Cal6.1c (35 aa).

Positions Gly1 to Ala35 are excised as a propeptide. 3 cysteine pairs are disulfide-bonded: Cys9/Cys25, Cys16/Cys29, and Cys24/Cys34.

The protein belongs to the conotoxin O1 superfamily. As to expression, expressed by the venom duct.

The protein localises to the secreted. Probable neurotoxin with unknown target. Possibly targets ion channels. This Californiconus californicus (California cone) protein is Conotoxin Cal6.1c.